Consider the following 457-residue polypeptide: MYNCAIILAAGKGKRMKSSMPKVVHKVCGKEMINHVIDNVRKANIKDVNLVIGKGSETVKEHTKDRNVTYSMQEEQLGTGHAVICAEEFLKDKKGTVAIFTGDAPLITNETIQELFEFHNSGKYAATLISSTVQDPTGYGRIIREASGVVKKIVEHKDCNEEELKVNEINSGMYCFDIEVLLNSLENLNNDNSQGEYYLTDVIEIIKKSGEKVGAIVVPYEEIMGVNSRVQLSEAEIVMRKRINHKHMVNGVTFIDCESTYIDVDVEIGNDTIIYPGCVIQGNTTIKEECTLYSNSRICNSVIGSGVIVENSVILESHVGEGTTVGPFAYIRPETKIGKSARIGDFVEIKKSTIGDNTKVSHLTYIGDAEVGSKCNFGCGTVVVNYDGQKKQKTIIGNNAFIGCNTNLISPVKVNDNTYIAAGSTITKEVPEGSLAIARSKQINKEGWLDKKGLLKK.

The segment at 1-229 (MYNCAIILAA…YEEIMGVNSR (229 aa)) is pyrophosphorylase. UDP-N-acetyl-alpha-D-glucosamine is bound by residues 8-11 (LAAG), Lys22, Gln73, and 78-79 (GT). Asp103 contributes to the Mg(2+) binding site. The UDP-N-acetyl-alpha-D-glucosamine site is built by Gly140, Glu155, Asn170, and Asn227. A Mg(2+)-binding site is contributed by Asn227. The linker stretch occupies residues 230–250 (VQLSEAEIVMRKRINHKHMVN). Residues 251 to 457 (GVTFIDCEST…WLDKKGLLKK (207 aa)) are N-acetyltransferase. UDP-N-acetyl-alpha-D-glucosamine contacts are provided by Arg332 and Lys350. His362 functions as the Proton acceptor in the catalytic mechanism. 2 residues coordinate UDP-N-acetyl-alpha-D-glucosamine: Tyr365 and Asn376. Acetyl-CoA contacts are provided by residues 385–386 (NY), Ala422, and Arg439.

It in the N-terminal section; belongs to the N-acetylglucosamine-1-phosphate uridyltransferase family. In the C-terminal section; belongs to the transferase hexapeptide repeat family. Homotrimer. Mg(2+) is required as a cofactor.

The protein localises to the cytoplasm. The enzyme catalyses alpha-D-glucosamine 1-phosphate + acetyl-CoA = N-acetyl-alpha-D-glucosamine 1-phosphate + CoA + H(+). It catalyses the reaction N-acetyl-alpha-D-glucosamine 1-phosphate + UTP + H(+) = UDP-N-acetyl-alpha-D-glucosamine + diphosphate. It functions in the pathway nucleotide-sugar biosynthesis; UDP-N-acetyl-alpha-D-glucosamine biosynthesis; N-acetyl-alpha-D-glucosamine 1-phosphate from alpha-D-glucosamine 6-phosphate (route II): step 2/2. The protein operates within nucleotide-sugar biosynthesis; UDP-N-acetyl-alpha-D-glucosamine biosynthesis; UDP-N-acetyl-alpha-D-glucosamine from N-acetyl-alpha-D-glucosamine 1-phosphate: step 1/1. Its pathway is bacterial outer membrane biogenesis; LPS lipid A biosynthesis. In terms of biological role, catalyzes the last two sequential reactions in the de novo biosynthetic pathway for UDP-N-acetylglucosamine (UDP-GlcNAc). The C-terminal domain catalyzes the transfer of acetyl group from acetyl coenzyme A to glucosamine-1-phosphate (GlcN-1-P) to produce N-acetylglucosamine-1-phosphate (GlcNAc-1-P), which is converted into UDP-GlcNAc by the transfer of uridine 5-monophosphate (from uridine 5-triphosphate), a reaction catalyzed by the N-terminal domain. The chain is Bifunctional protein GlmU from Clostridium botulinum (strain 657 / Type Ba4).